Reading from the N-terminus, the 333-residue chain is L-lactate dehydrogenase A chain (333 aa).

NAD(+)-binding positions include 30-58 and Arg100; that span reads GMVGMAAAVSILLKDLTDELALVDVMEDK. Substrate-binding residues include Arg107, Asn139, and Arg170. Residue Asn139 coordinates NAD(+). His194 serves as the catalytic Proton acceptor. Residue Thr249 participates in substrate binding.

The protein belongs to the LDH/MDH superfamily. LDH family. In terms of assembly, homotetramer.

Its subcellular location is the cytoplasm. The catalysed reaction is (S)-lactate + NAD(+) = pyruvate + NADH + H(+). It participates in fermentation; pyruvate fermentation to lactate; (S)-lactate from pyruvate: step 1/1. Its function is as follows. Interconverts simultaneously and stereospecifically pyruvate and lactate with concomitant interconversion of NADH and NAD(+). The chain is L-lactate dehydrogenase A chain (ldha) from Danio rerio (Zebrafish).